The following is a 689-amino-acid chain: UvrABC system protein C (689 aa).

The GIY-YIG domain maps to 16–95; that stretch reads TNPGVYRFRD…IKEFAPRFNI (80 aa). Positions 208–243 constitute a UVR domain; it reads KPYIRELTRQMNEAAECMDFETAAARRDDVGALERV. A disordered region spans residues 316–337; that stretch reads LAPAASGRRRTARHGSEDVVGQ.

Belongs to the UvrC family. As to quaternary structure, interacts with UvrB in an incision complex.

It localises to the cytoplasm. Functionally, the UvrABC repair system catalyzes the recognition and processing of DNA lesions. UvrC both incises the 5' and 3' sides of the lesion. The N-terminal half is responsible for the 3' incision and the C-terminal half is responsible for the 5' incision. The sequence is that of UvrABC system protein C from Kocuria rhizophila (strain ATCC 9341 / DSM 348 / NBRC 103217 / DC2201).